Here is a 695-residue protein sequence, read N- to C-terminus: Parasporal crystal protein Cry18Ca (695 aa).

This sequence belongs to the delta endotoxin family.

Functionally, binds to the brush border membrane vesicles of scarab larvae and damages the gut wall somehow to allow the vegetative cells of P.popilliae to enter the hemolymph. The polypeptide is Parasporal crystal protein Cry18Ca (cry18Ca) (Paenibacillus popilliae (Bacillus popilliae)).